Here is a 298-residue protein sequence, read N- to C-terminus: Glutamyl-Q tRNA(Asp) synthetase (298 aa).

L-glutamate-binding positions include Arg-9 to Ser-13 and Glu-45. The short motif at Pro-12–Ser-22 is the 'HIGH' region element. Zn(2+) contacts are provided by Cys-101, Cys-103, Tyr-121, and Cys-125. L-glutamate contacts are provided by Tyr-179 and Arg-197. A 'KMSKS' region motif is present at residues Lys-235–Gln-239. ATP is bound at residue Lys-238.

It belongs to the class-I aminoacyl-tRNA synthetase family. GluQ subfamily. It depends on Zn(2+) as a cofactor.

Its function is as follows. Catalyzes the tRNA-independent activation of glutamate in presence of ATP and the subsequent transfer of glutamate onto a tRNA(Asp). Glutamate is transferred on the 2-amino-5-(4,5-dihydroxy-2-cyclopenten-1-yl) moiety of the queuosine in the wobble position of the QUC anticodon. This Chromobacterium violaceum (strain ATCC 12472 / DSM 30191 / JCM 1249 / CCUG 213 / NBRC 12614 / NCIMB 9131 / NCTC 9757 / MK) protein is Glutamyl-Q tRNA(Asp) synthetase.